Here is a 477-residue protein sequence, read N- to C-terminus: Ribulose bisphosphate carboxylase large chain (477 aa).

Positions 1 to 2 (MS) are excised as a propeptide. Pro3 is modified (N-acetylproline). Residue Lys14 is modified to N6,N6,N6-trimethyllysine. The substrate site is built by Asn123 and Thr173. The Proton acceptor role is filled by Lys175. Residue Lys177 coordinates substrate. Mg(2+)-binding residues include Lys201, Asp203, and Glu204. Lys201 bears the N6-carboxylysine mark. His294 serves as the catalytic Proton acceptor. Residues Arg295, His327, and Ser379 each contribute to the substrate site.

This sequence belongs to the RuBisCO large chain family. Type I subfamily. In terms of assembly, heterohexadecamer of 8 large chains and 8 small chains; disulfide-linked. The disulfide link is formed within the large subunit homodimers. Mg(2+) is required as a cofactor. In terms of processing, the disulfide bond which can form in the large chain dimeric partners within the hexadecamer appears to be associated with oxidative stress and protein turnover.

It is found in the plastid. The protein resides in the chloroplast. It carries out the reaction 2 (2R)-3-phosphoglycerate + 2 H(+) = D-ribulose 1,5-bisphosphate + CO2 + H2O. The enzyme catalyses D-ribulose 1,5-bisphosphate + O2 = 2-phosphoglycolate + (2R)-3-phosphoglycerate + 2 H(+). Functionally, ruBisCO catalyzes two reactions: the carboxylation of D-ribulose 1,5-bisphosphate, the primary event in carbon dioxide fixation, as well as the oxidative fragmentation of the pentose substrate in the photorespiration process. Both reactions occur simultaneously and in competition at the same active site. The protein is Ribulose bisphosphate carboxylase large chain of Nicotiana acuminata (Acuminate tobacco).